The primary structure comprises 529 residues: DnaJ homolog l(2)tid, mitochondrial (529 aa).

Residues 1-22 constitute a mitochondrion transit peptide; the sequence is MISCKNLCVLRQLPLKNCRRHY. Position 35 is an omega-N-methylarginine (Arg-35). One can recognise a J domain in the interval 80 to 145; sequence DYYATLGVAK…QKRREYDTYG (66 aa). The residue at position 121 (Lys-121) is an N6-acetyllysine. The segment at 230–308 adopts a CR-type zinc-finger fold; sequence GVNKDVNVNV…CEGKGQTVQR (79 aa). Positions 243, 246, 260, 263, 282, 285, 296, and 299 each coordinate Zn(2+). Residues 243–250 form a CXXCXGXG motif; approximate repeat; the sequence is CPKCAGSK. One copy of the CXXCXGXG motif repeat lies at 260–267; sequence CQYCNGTG. The stretch at 282–289 is one CXXCXGXG motif; approximate repeat; sequence CRYCQGTR. A CXXCXGXG motif repeat occupies 296–303; sequence CAECEGKG. Positions 441-529 are disordered; sequence TPGQIHGMAQ…FLNKIKSMFN (89 aa). A compositionally biased stretch (basic and acidic residues) spans 497–508; the sequence is QSEKSETRRKDQ.

It localises to the mitochondrion outer membrane. In terms of biological role, may act as a tumor suppressor in larval imaginal disks. This Drosophila virilis (Fruit fly) protein is DnaJ homolog l(2)tid, mitochondrial (l(2)tid).